Consider the following 389-residue polypeptide: Succinate--CoA ligase [ADP-forming] subunit beta (389 aa).

The 236-residue stretch at lysine 9–glutamate 244 folds into the ATP-grasp domain. Residues lysine 46, glycine 53 to glycine 55, glutamate 99, alanine 102, and glutamate 107 contribute to the ATP site. Mg(2+) contacts are provided by asparagine 199 and aspartate 213. Substrate contacts are provided by residues asparagine 264 and glycine 321–methionine 323.

It belongs to the succinate/malate CoA ligase beta subunit family. In terms of assembly, heterotetramer of two alpha and two beta subunits. Mg(2+) serves as cofactor.

It carries out the reaction succinate + ATP + CoA = succinyl-CoA + ADP + phosphate. It catalyses the reaction GTP + succinate + CoA = succinyl-CoA + GDP + phosphate. It functions in the pathway carbohydrate metabolism; tricarboxylic acid cycle; succinate from succinyl-CoA (ligase route): step 1/1. Its function is as follows. Succinyl-CoA synthetase functions in the citric acid cycle (TCA), coupling the hydrolysis of succinyl-CoA to the synthesis of either ATP or GTP and thus represents the only step of substrate-level phosphorylation in the TCA. The beta subunit provides nucleotide specificity of the enzyme and binds the substrate succinate, while the binding sites for coenzyme A and phosphate are found in the alpha subunit. The chain is Succinate--CoA ligase [ADP-forming] subunit beta from Cupriavidus pinatubonensis (strain JMP 134 / LMG 1197) (Cupriavidus necator (strain JMP 134)).